We begin with the raw amino-acid sequence, 122 residues long: Ig heavy chain V region M603 (122 aa).

One can recognise an Ig-like domain in the interval 1 to 121 (EVKLVESGGG…WGAGTTVTVS (121 aa)).

This chain is Ig heavy chain V region M603, found in Mus musculus (Mouse).